We begin with the raw amino-acid sequence, 418 residues long: Oxalate:formate antiporter (418 aa).

The next 12 membrane-spanning stretches (helical) occupy residues 17–37 (WFYLVLAVLLMCMISGVQYSW), 48–68 (LGVSLAAVQTAFTLSQVIQAG), 84–104 (IPLMFGGAMVLAGWTFMGMVD), 108–128 (ALYALYTLAGAGVGIVYGIAM), 141–161 (LASGFTAAGYGLGVLPFLPLI), 172–192 (AAFMYTGLIMGILIILIAFVI), 222–242 (FWVLWTAFFSVNFGGLLLVAN), 250–270 (LGLAAGVLTIGVSIQNLFNGG), 288–308 (MSVVFGINAVVLALFPTIAAL), 311–331 (VAFIAMLAIAFFTWGGSYALF), 350–370 (FFWAAKATASIFGGGLGAAIA), and 378–398 (AFLITAITSFIAFALATFVIP). Residue Lys-355 coordinates oxalate.

It belongs to the major facilitator superfamily. OFA (TC 2.A.1.11) family. In terms of assembly, monomer.

Its subcellular location is the cell inner membrane. Its function is as follows. Anion transporter that carries out the exchange of divalent oxalate with monovalent formate, the product of oxalate decarboxylation, at the plasma membrane, and in doing so catalyzes the vectorial portion of a proton-motive metabolic cycle that drives ATP synthesis. The chain is Oxalate:formate antiporter (oxlT) from Oxalobacter formigenes.